A 498-amino-acid chain; its full sequence is MQLSKYKNQSVAVFGLGKTGLSVINVLIKSGAKAYAWDDSKEQMANAKTMYKECNFIHPKKYDWHEIKALILSPGVPISYPKPHWIVKLARSFDCKIKSDIELFLEAKAKNQKIVGVTGTNGKSTTTSLIGHILKSAGKKVAIGGNLGVPILDLEKDAEIYVIEISSFQLELINMPAVIPVHDHTFFSGSQYRAAWMIKRVSEMTKKMTEVTKRMAGMIKVDISVLLNITLDHIDRHGSMENYIAVKSKLIGGSKVAVIGCDNEITADIFNKFTGNKIPISGVRSLLDDKKGAEIQEISLKLENHNLSASDAKINLTSNAENIAASCAVCKLLKVDSSTIIDGIKSFSGLKHRNELLGKIENVLFVNDSKATNAESSKKAILSYKNIYWIVGGRSKEGGIESLSKHFARIRKALLIGESTEVFASTMENKVDYVRCCNLEDAFRLAFEEAIKSKEKTTILLSPACASFDQWRNFEERGEAFCRMFEKLRDSFTITRVV.

An ATP-binding site is contributed by Gly119–Thr125.

This sequence belongs to the MurCDEF family.

It is found in the cytoplasm. It catalyses the reaction UDP-N-acetyl-alpha-D-muramoyl-L-alanine + D-glutamate + ATP = UDP-N-acetyl-alpha-D-muramoyl-L-alanyl-D-glutamate + ADP + phosphate + H(+). The protein operates within cell wall biogenesis; peptidoglycan biosynthesis. Cell wall formation. Catalyzes the addition of glutamate to the nucleotide precursor UDP-N-acetylmuramoyl-L-alanine (UMA). This chain is UDP-N-acetylmuramoylalanine--D-glutamate ligase, found in Wolbachia sp. subsp. Brugia malayi (strain TRS).